A 1025-amino-acid chain; its full sequence is Multidrug resistance protein MdtC (1025 aa).

The next 12 membrane-spanning stretches (helical) occupy residues 3–23 (FFAL…AITL), 333–353 (EVEQ…FLFL), 360–380 (IIPA…MYLC), 387–407 (LSLM…IVVL), 431–451 (VGFT…PLLL), 463–483 (FAVT…TLTP), 528–548 (LVGV…ISIP), 853–873 (VILI…LYES), 875–895 (VHPL…LLAL), 897–917 (LFNA…IGIV), 953–973 (PIMM…LSGG), and 984–1004 (ITIV…TPVV).

The protein belongs to the resistance-nodulation-cell division (RND) (TC 2.A.6) family. MdtC subfamily. As to quaternary structure, part of a tripartite efflux system composed of MdtA, MdtB and MdtC. MdtC forms a heteromultimer with MdtB.

It is found in the cell inner membrane. Functionally, the MdtABC tripartite complex confers resistance against novobiocin and deoxycholate. This Escherichia coli O17:K52:H18 (strain UMN026 / ExPEC) protein is Multidrug resistance protein MdtC.